The sequence spans 256 residues: 1-(5-phosphoribosyl)-5-[(5-phosphoribosylamino)methylideneamino] imidazole-4-carboxamide isomerase (256 aa).

The active-site Proton acceptor is the aspartate 8. Aspartate 129 functions as the Proton donor in the catalytic mechanism.

Belongs to the HisA/HisF family.

Its subcellular location is the cytoplasm. The catalysed reaction is 1-(5-phospho-beta-D-ribosyl)-5-[(5-phospho-beta-D-ribosylamino)methylideneamino]imidazole-4-carboxamide = 5-[(5-phospho-1-deoxy-D-ribulos-1-ylimino)methylamino]-1-(5-phospho-beta-D-ribosyl)imidazole-4-carboxamide. It participates in amino-acid biosynthesis; L-histidine biosynthesis; L-histidine from 5-phospho-alpha-D-ribose 1-diphosphate: step 4/9. The protein is 1-(5-phosphoribosyl)-5-[(5-phosphoribosylamino)methylideneamino] imidazole-4-carboxamide isomerase of Syntrophobacter fumaroxidans (strain DSM 10017 / MPOB).